A 231-amino-acid chain; its full sequence is uncharacterized protein (231 aa).

This is an uncharacterized protein from Mycobacterium tuberculosis (strain ATCC 25618 / H37Rv).